We begin with the raw amino-acid sequence, 75 residues long: MIFEKVRDIIAEQLGIDPEEITMESSFIDDLGADSLDIVELIMALEEEFDIEIPDEDAEKIKTVGDVVEYLSNLE.

Residues 1 to 75 (MIFEKVRDII…DVVEYLSNLE (75 aa)) form the Carrier domain. At Ser35 the chain carries O-(pantetheine 4'-phosphoryl)serine.

Belongs to the acyl carrier protein (ACP) family. Post-translationally, 4'-phosphopantetheine is transferred from CoA to a specific serine of apo-ACP by AcpS. This modification is essential for activity because fatty acids are bound in thioester linkage to the sulfhydryl of the prosthetic group.

Its subcellular location is the cytoplasm. Its pathway is lipid metabolism; fatty acid biosynthesis. Its function is as follows. Carrier of the growing fatty acid chain in fatty acid biosynthesis. This is Acyl carrier protein from Thermoanaerobacter pseudethanolicus (strain ATCC 33223 / 39E) (Clostridium thermohydrosulfuricum).